We begin with the raw amino-acid sequence, 543 residues long: uncharacterized protein (543 aa).

Helical transmembrane passes span 47-67, 79-99, 126-146, 176-196, 198-218, and 249-269; these read FSLL…PSLV, GGMV…AFAL, AFLS…GFAS, IYVA…KFLA, FSSF…ISLA, and FILC…CATI. Residue Asn275 is glycosylated (N-linked (GlcNAc...) asparagine). The next 3 helical transmembrane spans lie at 282-302, 335-355, and 384-404; these read IAII…MITI, AVGV…ALCL, and IPLN…LLML. N-linked (GlcNAc...) asparagine glycosylation occurs at Asn406. A run of 3 helical transmembrane segments spans residues 410 to 430, 452 to 472, and 480 to 500; these read ISSI…LPLV, ISIV…FPSY, and MNWA…YYYL. Residue Asn519 is glycosylated (N-linked (GlcNAc...) asparagine).

The protein belongs to the amino acid-polyamine-organocation (APC) superfamily.

It is found in the membrane. This is an uncharacterized protein from Schizosaccharomyces pombe (strain 972 / ATCC 24843) (Fission yeast).